A 131-amino-acid chain; its full sequence is C-C motif chemokine 21 (131 aa).

The first 23 residues, 1–23, serve as a signal peptide directing secretion; the sequence is MAQSLALSLLILVLAFGIPGTQG. Disulfide bonds link Cys-31/Cys-57, Cys-32/Cys-75, and Cys-103/Cys-119. The interval 89–131 is disordered; sequence HLDKTPTPRKPVQGCRKDRGVPKNGKKGKGCKRTEQSQTPKGP.

This sequence belongs to the intercrine beta (chemokine CC) family. As to quaternary structure, monomer. Binds to CCR7. Interacts with PDPN; relocalizes PDPN to the basolateral membrane. Interacts with TNFAIP6 (via Link domain). Interacts with GPR174.

The protein localises to the secreted. Its function is as follows. Inhibits hemopoiesis and stimulates chemotaxis. Chemotactic in vitro for thymocytes and activated T-cells, but not for B-cells, macrophages, or neutrophils. Shows preferential activity towards naive T-cells. May play a role in mediating homing of lymphocytes to secondary lymphoid organs. Binds to atypical chemokine receptor ACKR4 and mediates the recruitment of beta-arrestin (ARRB1/2) to ACKR4. The polypeptide is C-C motif chemokine 21 (CCL21) (Macaca mulatta (Rhesus macaque)).